The chain runs to 198 residues: Dephospho-CoA kinase (198 aa).

Positions 3 to 198 (VVGLTGGIGA…HRRYSLLAAA (196 aa)) constitute a DPCK domain. 11-16 (GAGKST) contributes to the ATP binding site.

The protein belongs to the CoaE family.

Its subcellular location is the cytoplasm. It catalyses the reaction 3'-dephospho-CoA + ATP = ADP + CoA + H(+). Its pathway is cofactor biosynthesis; coenzyme A biosynthesis; CoA from (R)-pantothenate: step 5/5. Catalyzes the phosphorylation of the 3'-hydroxyl group of dephosphocoenzyme A to form coenzyme A. The sequence is that of Dephospho-CoA kinase from Methylococcus capsulatus (strain ATCC 33009 / NCIMB 11132 / Bath).